The primary structure comprises 377 residues: Chorismate synthase (377 aa).

Arginine 47 lines the NADP(+) pocket. FMN is bound by residues 124–126, 252–253, glycine 296, 311–315, and arginine 338; these read RSS, NS, and KPTPS.

The protein belongs to the chorismate synthase family. It depends on FMNH2 as a cofactor.

The catalysed reaction is 5-O-(1-carboxyvinyl)-3-phosphoshikimate = chorismate + phosphate. It functions in the pathway metabolic intermediate biosynthesis; chorismate biosynthesis; chorismate from D-erythrose 4-phosphate and phosphoenolpyruvate: step 7/7. In terms of biological role, catalyzes the anti-1,4-elimination of the C-3 phosphate and the C-6 proR hydrogen from 5-enolpyruvylshikimate-3-phosphate (EPSP) to yield chorismate, which is the branch point compound that serves as the starting substrate for the three terminal pathways of aromatic amino acid biosynthesis. This reaction introduces a second double bond into the aromatic ring system. The polypeptide is Chorismate synthase (Methanococcus vannielii (strain ATCC 35089 / DSM 1224 / JCM 13029 / OCM 148 / SB)).